A 681-amino-acid chain; its full sequence is NADH-quinone oxidoreductase subunit G (681 aa).

The region spanning 1 to 78 (MIKLTIDGQE…GMVIHTDTPM (78 aa)) is the 2Fe-2S ferredoxin-type domain. Residues cysteine 34, cysteine 45, cysteine 48, and cysteine 62 each contribute to the [2Fe-2S] cluster site. The 4Fe-4S His(Cys)3-ligated-type domain maps to 78-117 (MVKKAREGVMEFLLVNHPLDCPICDQGGECDLQDQAFRYG). Residues histidine 94, cysteine 98, cysteine 101, cysteine 107, cysteine 146, cysteine 149, cysteine 152, and cysteine 196 each contribute to the [4Fe-4S] cluster site. In terms of domain architecture, 4Fe-4S Mo/W bis-MGD-type spans 215–271 (LRHTASIGVHDAEGSNIRIDSRGDEVMRVLPRVNEEINEEWLSDKNRFSYDGLKYQR).

Belongs to the complex I 75 kDa subunit family. [2Fe-2S] cluster serves as cofactor. Requires [4Fe-4S] cluster as cofactor.

The enzyme catalyses a quinone + NADH + 5 H(+)(in) = a quinol + NAD(+) + 4 H(+)(out). Its function is as follows. NDH-1 shuttles electrons from NADH, via FMN and iron-sulfur (Fe-S) centers, to quinones in the respiratory chain. Couples the redox reaction to proton translocation (for every two electrons transferred, four hydrogen ions are translocated across the cytoplasmic membrane), and thus conserves the redox energy in a proton gradient. The protein is NADH-quinone oxidoreductase subunit G (nuoG) of Rickettsia bellii (strain RML369-C).